Reading from the N-terminus, the 341-residue chain is Glycerol-3-phosphate dehydrogenase [NAD(P)+] (341 aa).

NADPH contacts are provided by Ser11, Trp12, Arg32, and Lys106. Sn-glycerol 3-phosphate-binding residues include Lys106, Gly137, and Thr139. Ala141 lines the NADPH pocket. Positions 192, 245, 255, 256, and 257 each coordinate sn-glycerol 3-phosphate. The Proton acceptor role is filled by Lys192. Residue Arg256 coordinates NADPH. NADPH-binding residues include Val280 and Glu282.

The protein belongs to the NAD-dependent glycerol-3-phosphate dehydrogenase family.

It localises to the cytoplasm. It catalyses the reaction sn-glycerol 3-phosphate + NAD(+) = dihydroxyacetone phosphate + NADH + H(+). The catalysed reaction is sn-glycerol 3-phosphate + NADP(+) = dihydroxyacetone phosphate + NADPH + H(+). Its pathway is membrane lipid metabolism; glycerophospholipid metabolism. In terms of biological role, catalyzes the reduction of the glycolytic intermediate dihydroxyacetone phosphate (DHAP) to sn-glycerol 3-phosphate (G3P), the key precursor for phospholipid synthesis. This Exiguobacterium sp. (strain ATCC BAA-1283 / AT1b) protein is Glycerol-3-phosphate dehydrogenase [NAD(P)+].